A 458-amino-acid polypeptide reads, in one-letter code: tRNA(Ile)-lysidine synthase (458 aa).

35–40 (SGGVDS) lines the ATP pocket.

This sequence belongs to the tRNA(Ile)-lysidine synthase family.

It is found in the cytoplasm. The enzyme catalyses cytidine(34) in tRNA(Ile2) + L-lysine + ATP = lysidine(34) in tRNA(Ile2) + AMP + diphosphate + H(+). Functionally, ligates lysine onto the cytidine present at position 34 of the AUA codon-specific tRNA(Ile) that contains the anticodon CAU, in an ATP-dependent manner. Cytidine is converted to lysidine, thus changing the amino acid specificity of the tRNA from methionine to isoleucine. The sequence is that of tRNA(Ile)-lysidine synthase from Nitrosomonas europaea (strain ATCC 19718 / CIP 103999 / KCTC 2705 / NBRC 14298).